Here is a 203-residue protein sequence, read N- to C-terminus: Large ribosomal subunit protein uL13 (203 aa).

N-acetylalanine is present on A2. The residue at position 59 (R59) is a Citrulline. The residue at position 77 (S77) is a Phosphoserine; by ZIPK/DAPK3. R140 carries the citrulline modification. K191 is subject to N6-acetyllysine.

The protein belongs to the universal ribosomal protein uL13 family. As to quaternary structure, component of the 60S ribosome. Component of the GAIT complex. Interacts with EIF4G1. Phosphorylation at Ser-77 upon interferon-gamma treatment in monocytes involves a DAPK1-DAPK3 kinase cascade and is causing release from the ribosome, association with the GAIT complex and subsequent involvement in transcript-selective translation inhibition. Post-translationally, citrullinated by PADI4.

It localises to the cytoplasm. Functionally, associated with ribosomes but is not required for canonical ribosome function and has extra-ribosomal functions. Component of the GAIT (gamma interferon-activated inhibitor of translation) complex which mediates interferon-gamma-induced transcript-selective translation inhibition in inflammation processes. Upon interferon-gamma activation and subsequent phosphorylation dissociates from the ribosome and assembles into the GAIT complex which binds to stem loop-containing GAIT elements in the 3'-UTR of diverse inflammatory mRNAs (such as ceruplasmin) and suppresses their translation. In the GAIT complex interacts with m7G cap-bound eIF4G at or near the eIF3-binding site and blocks the recruitment of the 43S ribosomal complex. Involved in methylation of rRNA. This Homo sapiens (Human) protein is Large ribosomal subunit protein uL13 (RPL13A).